The sequence spans 626 residues: Probable potassium transport system protein Kup (626 aa).

12 helical membrane passes run 11–31 (FLTL…TSPL), 55–75 (LSLI…VFVM), 103–123 (AWII…GMIT), 140–160 (AALS…LFLI), 171–191 (LFGP…FVSL), 216–236 (LGFA…ALYA), 250–270 (WFAV…ALLI), 282–302 (LLVP…ATVI), 340–360 (IYAP…VLAF), 369–389 (AYGL…LVVA), 395–415 (WPGL…LSFL), and 422–442 (LGDG…VMST).

It belongs to the HAK/KUP transporter (TC 2.A.72) family.

Its subcellular location is the cell inner membrane. It carries out the reaction K(+)(in) + H(+)(in) = K(+)(out) + H(+)(out). Functionally, transport of potassium into the cell. Likely operates as a K(+):H(+) symporter. The sequence is that of Probable potassium transport system protein Kup from Methylococcus capsulatus (strain ATCC 33009 / NCIMB 11132 / Bath).